The following is a 120-amino-acid chain: uncharacterized protein (120 aa).

Helical transmembrane passes span 9–29, 32–52, 68–88, and 94–114; these read WPDF…LFCG, ALMF…ADCL, FVWP…VMAT, and GPEH…SFRF.

The protein localises to the membrane. This is an uncharacterized protein from Escherichia phage Mu (Bacteriophage Mu).